The chain runs to 445 residues: Trigger factor (445 aa).

The region spanning G162 to T247 is the PPIase FKBP-type domain.

It belongs to the FKBP-type PPIase family. Tig subfamily.

It is found in the cytoplasm. It carries out the reaction [protein]-peptidylproline (omega=180) = [protein]-peptidylproline (omega=0). Functionally, involved in protein export. Acts as a chaperone by maintaining the newly synthesized protein in an open conformation. Functions as a peptidyl-prolyl cis-trans isomerase. This chain is Trigger factor, found in Rickettsia peacockii (strain Rustic).